The sequence spans 480 residues: Uridine/deoxyuridine transporter (480 aa).

The next 14 membrane-spanning stretches (helical) occupy residues 14 to 34, 55 to 75, 93 to 113, 115 to 135, 147 to 167, 174 to 194, 207 to 227, 239 to 259, 280 to 300, 320 to 340, 358 to 378, 382 to 402, 417 to 437, and 449 to 469; these read VGSI…FQLN, SIAL…LFLP, LTMI…LMIG, ILQG…HVKV, ILTS…GWLV, SVFF…SFGT, WTGV…VNAL, WLLA…FWQV, GLLI…NGII, LVTL…SGFL, IIGI…LLLL, FIGI…GIVL, GMFN…PTVL, and ISGI…SFLI.

It belongs to the major facilitator superfamily. EmrB family.

Its subcellular location is the cell membrane. In terms of biological role, responsible for the uptake of uridine and deoxyuridine. Not involved in purine nucleoside uptake. The polypeptide is Uridine/deoxyuridine transporter (Lactococcus lactis subsp. cremoris (strain MG1363)).